The sequence spans 212 residues: Thymidylate kinase (212 aa).

10–17 (GIDGCGKT) lines the ATP pocket.

It belongs to the thymidylate kinase family.

It carries out the reaction dTMP + ATP = dTDP + ADP. Its function is as follows. Phosphorylation of dTMP to form dTDP in both de novo and salvage pathways of dTTP synthesis. This is Thymidylate kinase from Prochlorococcus marinus (strain MIT 9301).